Consider the following 178-residue polypeptide: CDP-diacylglycerol--glycerol-3-phosphate 3-phosphatidyltransferase (178 aa).

4 consecutive transmembrane segments (helical) span residues 5 to 25 (PNYL…LFYI), 32 to 52 (KLGA…GYIA), 61 to 81 (FGKM…TIML), and 145 to 165 (IIYL…LTII).

It belongs to the CDP-alcohol phosphatidyltransferase class-I family.

It localises to the cell membrane. It catalyses the reaction a CDP-1,2-diacyl-sn-glycerol + sn-glycerol 3-phosphate = a 1,2-diacyl-sn-glycero-3-phospho-(1'-sn-glycero-3'-phosphate) + CMP + H(+). Its pathway is phospholipid metabolism; phosphatidylglycerol biosynthesis; phosphatidylglycerol from CDP-diacylglycerol: step 1/2. This protein catalyzes the committed step to the synthesis of the acidic phospholipids. The sequence is that of CDP-diacylglycerol--glycerol-3-phosphate 3-phosphatidyltransferase (pgsA) from Rickettsia typhi (strain ATCC VR-144 / Wilmington).